Here is a 292-residue protein sequence, read N- to C-terminus: Ribosomal RNA small subunit methyltransferase A (292 aa).

S-adenosyl-L-methionine contacts are provided by asparagine 29, leucine 31, glycine 56, glutamate 77, aspartate 102, and asparagine 127.

Belongs to the class I-like SAM-binding methyltransferase superfamily. rRNA adenine N(6)-methyltransferase family. RsmA subfamily.

The protein localises to the cytoplasm. It carries out the reaction adenosine(1518)/adenosine(1519) in 16S rRNA + 4 S-adenosyl-L-methionine = N(6)-dimethyladenosine(1518)/N(6)-dimethyladenosine(1519) in 16S rRNA + 4 S-adenosyl-L-homocysteine + 4 H(+). In terms of biological role, specifically dimethylates two adjacent adenosines (A1518 and A1519) in the loop of a conserved hairpin near the 3'-end of 16S rRNA in the 30S particle. May play a critical role in biogenesis of 30S subunits. This chain is Ribosomal RNA small subunit methyltransferase A, found in Bacillus pumilus (strain SAFR-032).